A 463-amino-acid polypeptide reads, in one-letter code: Asparagine--tRNA ligase (463 aa).

It belongs to the class-II aminoacyl-tRNA synthetase family. In terms of assembly, homodimer.

It localises to the cytoplasm. The enzyme catalyses tRNA(Asn) + L-asparagine + ATP = L-asparaginyl-tRNA(Asn) + AMP + diphosphate + H(+). This Alkaliphilus oremlandii (strain OhILAs) (Clostridium oremlandii (strain OhILAs)) protein is Asparagine--tRNA ligase.